The primary structure comprises 241 residues: Protein McbE (241 aa).

6 helical membrane-spanning segments follow: residues 17–35 (TPFSLIWTIMSPTVLFFFL), 54–72 (ISWFVGYISFSVVLFNYCL), 105–123 (LIMSILYVFFFILVVLTGF), 131–149 (IVMIILKSIYINAFMMVSL), 163–181 (STIYSVLITVCMVSGIVSL), and 212–230 (LMTIFFYSIMLIISIISAL).

It localises to the cell membrane. In terms of biological role, together with two further proteins McbF and McbG this protein causes immunity to the peptide antibiotic microcin B17 (MccB17), which inhibits DNA replication in enterobacteriaceae. Immunity is determined by two different mechanisms. McbE is involved in the production of extracellular MccB17 and, in a complex with McbF it also serves as 'pump' for the export of active MccB17 from the cytoplasm to the periplasmic space. This Escherichia coli protein is Protein McbE (mcbE).